A 706-amino-acid chain; its full sequence is MARKTPLKRYRNIGIVAHVDAGKTTTTERVLFYTGLSHKVGEVHDGAATMDWMEQEQERGITITSAATTCFWQGMNKQFDEHRINIIDTPGHVDFTIEVERSLRVLDGAVVVLCGSSGVQPQTETVWRQANKYEVPRMVFVNKMDRAGADYFMVLDQLKQKLGANTVPIQINWGAEDDFKGVIDLIQMKGILWDEANHGMNYELVEIPDELKESAAKYREQMVEAAAEASEELMDKYLEEGDLSEADIKAGLRRRTLDNEIVLVTCGSAFKNKGVQAVLDGVIEYMPSPTEVKAIEGELDDKDGTIATREADDSAPFAALAFKIATDPFVGTLTFIRVYSGVLKSGDSIFNSVKSKKERVGRIVQMHSNSREEIKEVYAGDIAACIGLKDVTTGDTLCDLNDKIILERMEFPDPVISVAVEPKSKPDQEKMGTALGKLAQEDPSFRVKTDEETGQTIISGMGELHLDIIVDRLRREFKVDANIGKPQVAYRETIRASVEQEGKFVRQSGGRGQYGHVLLRIEPLTAEDKGEDEDMTFKFASEIVGGVVPKEYVPAVEKGAYEQLQNGVIAGYPMIDVKVTLFDGSYHDVDSNETAFKVASSMAIKEGAPKAKAVLLEPVMKVEVVTPEEFMGDVMGDLNRRRGLVQGMDDSPSGKIIRATVPLAEMFGYATDLRSQTQGRASYTMEFADYEEAPSSVVEAVINQNG.

Residues 8–290 form the tr-type G domain; sequence KRYRNIGIVA…GVIEYMPSPT (283 aa). GTP-binding positions include 17–24, 88–92, and 142–145; these read AHVDAGKT, DTPGH, and NKMD.

Belongs to the TRAFAC class translation factor GTPase superfamily. Classic translation factor GTPase family. EF-G/EF-2 subfamily.

Its subcellular location is the cytoplasm. Functionally, catalyzes the GTP-dependent ribosomal translocation step during translation elongation. During this step, the ribosome changes from the pre-translocational (PRE) to the post-translocational (POST) state as the newly formed A-site-bound peptidyl-tRNA and P-site-bound deacylated tRNA move to the P and E sites, respectively. Catalyzes the coordinated movement of the two tRNA molecules, the mRNA and conformational changes in the ribosome. This is Elongation factor G from Chromohalobacter salexigens (strain ATCC BAA-138 / DSM 3043 / CIP 106854 / NCIMB 13768 / 1H11).